We begin with the raw amino-acid sequence, 207 residues long: LexA repressor (207 aa).

A DNA-binding region (H-T-H motif) is located at residues 28 to 48 (VREIGEAVGLASSSTVHGHLS). Catalysis depends on for autocatalytic cleavage activity residues S130 and K168.

Belongs to the peptidase S24 family. In terms of assembly, homodimer.

It catalyses the reaction Hydrolysis of Ala-|-Gly bond in repressor LexA.. Functionally, represses a number of genes involved in the response to DNA damage (SOS response), including recA and lexA. In the presence of single-stranded DNA, RecA interacts with LexA causing an autocatalytic cleavage which disrupts the DNA-binding part of LexA, leading to derepression of the SOS regulon and eventually DNA repair. The protein is LexA repressor of Staphylococcus aureus (strain MSSA476).